Consider the following 584-residue polypeptide: Arginine--tRNA ligase (584 aa).

Residues Pro127 to His137 carry the 'HIGH' region motif.

The protein belongs to the class-I aminoacyl-tRNA synthetase family. Monomer.

It is found in the cytoplasm. It catalyses the reaction tRNA(Arg) + L-arginine + ATP = L-arginyl-tRNA(Arg) + AMP + diphosphate. The chain is Arginine--tRNA ligase from Borrelia turicatae (strain 91E135).